We begin with the raw amino-acid sequence, 602 residues long: MKNLSFLINRRKENTSDSNVYPGKAKSHEPSWIEMDDQTKKDGLDIVHVEFSPDTRAPSDSNKVITEIFDATEDAKEADESERGMPLATALNTYPKAAAWSLLVSTTLIMEGYDTAILGAFYALPIFQRKFGSQNDKTGEWEISASWQIGLTLCYMAGEIVGLQLTGPSVDLVGNRYTLIIALFFLAAFTFILYFCNSLGMIAVGQALCGMPWGCFQCLTVSYASEICPLALRYYLTTYSNLCWLFGQLFAAGIMKNSQKKYADSELGYKLPFALQWILPVPLALGIFFAPESPWWLVKKGRFDEARRSLRRTLSGKGPEKEILVTLEVDKIKVTIDKEKRLTSKEGSYSDCFEDKINRRRTRITCLCWAGQATCGSILIGYSTYFYEKAGVSTEMSFTFSIIQYCLGICATFLSWWASKYFGRYDLYAFGLAFQTIVFFIIGGLGCSSTHGSKMGSGSLLMAVAFFYNLGIAPVVFCLVSEMPSSRLRTKTIILARNTYNVVSIICSVLILYQLNSKKWNWGAKSGFFWGVLCFCTLIWAVVDLPETAGKTFVEINELFKLGVSARKFKSTKVDPFVVKTPPKDVSHNDPKGDIEASIAEE.

Over 1–106 (MKNLSFLINR…AAAWSLLVST (106 aa)) the chain is Cytoplasmic. A helical transmembrane segment spans residues 107 to 127 (TLIMEGYDTAILGAFYALPIF). Residues 128–142 (QRKFGSQNDKTGEWE) lie on the Extracellular side of the membrane. The helical transmembrane segment at 143 to 163 (ISASWQIGLTLCYMAGEIVGL) threads the bilayer. At 164 to 178 (QLTGPSVDLVGNRYT) the chain is on the cytoplasmic side. The helical transmembrane segment at 179–199 (LIIALFFLAAFTFILYFCNSL) threads the bilayer. Position 200 (Gly-200) is a topological domain, extracellular. The chain crosses the membrane as a helical span at residues 201-221 (MIAVGQALCGMPWGCFQCLTV). The Cytoplasmic portion of the chain corresponds to 222 to 234 (SYASEICPLALRY). The chain crosses the membrane as a helical span at residues 235–255 (YLTTYSNLCWLFGQLFAAGIM). Residues 256-270 (KNSQKKYADSELGYK) lie on the Extracellular side of the membrane. The helical transmembrane segment at 271-291 (LPFALQWILPVPLALGIFFAP) threads the bilayer. Topologically, residues 292–363 (ESPWWLVKKG…EDKINRRRTR (72 aa)) are cytoplasmic. Residues 364–384 (ITCLCWAGQATCGSILIGYST) traverse the membrane as a helical segment. The Extracellular portion of the chain corresponds to 385–397 (YFYEKAGVSTEMS). Residues 398–418 (FTFSIIQYCLGICATFLSWWA) traverse the membrane as a helical segment. Residues 419–426 (SKYFGRYD) lie on the Cytoplasmic side of the membrane. A helical transmembrane segment spans residues 427–447 (LYAFGLAFQTIVFFIIGGLGC). Residues 448-459 (SSTHGSKMGSGS) lie on the Extracellular side of the membrane. The chain crosses the membrane as a helical span at residues 460–480 (LLMAVAFFYNLGIAPVVFCLV). Over 481 to 492 (SEMPSSRLRTKT) the chain is Cytoplasmic. Residues 493 to 513 (IILARNTYNVVSIICSVLILY) form a helical membrane-spanning segment. Residues 514 to 525 (QLNSKKWNWGAK) are Extracellular-facing. The chain crosses the membrane as a helical span at residues 526-546 (SGFFWGVLCFCTLIWAVVDLP). Residues 547-602 (ETAGKTFVEINELFKLGVSARKFKSTKVDPFVVKTPPKDVSHNDPKGDIEASIAEE) lie on the Cytoplasmic side of the membrane. The segment covering 582-595 (PPKDVSHNDPKGDI) has biased composition (basic and acidic residues). The segment at 582-602 (PPKDVSHNDPKGDIEASIAEE) is disordered.

The protein belongs to the major facilitator superfamily. Sugar transporter (TC 2.A.1.1) family.

It is found in the cell membrane. High-affinity uptake of maltose and maltotriose. Also transports alpha-methylglucoside, glucose and turanose but not melezitose or trehalose. The polypeptide is Alpha-glucosides permease MPH3 (MPH3) (Saccharomyces cerevisiae (strain ATCC 204508 / S288c) (Baker's yeast)).